The sequence spans 209 residues: Urease accessory protein UreG (209 aa).

GTP is bound at residue Gly-16 to Thr-23.

Belongs to the SIMIBI class G3E GTPase family. UreG subfamily. In terms of assembly, homodimer. UreD, UreF and UreG form a complex that acts as a GTP-hydrolysis-dependent molecular chaperone, activating the urease apoprotein by helping to assemble the nickel containing metallocenter of UreC. The UreE protein probably delivers the nickel.

The protein localises to the cytoplasm. Functionally, facilitates the functional incorporation of the urease nickel metallocenter. This process requires GTP hydrolysis, probably effectuated by UreG. The polypeptide is Urease accessory protein UreG (Blochmanniella floridana).